Consider the following 956-residue polypeptide: UvrABC system protein A (956 aa).

33 to 40 (GLSGSGKS) contacts ATP. A C4-type zinc finger spans residues 252–279 (CPYCGFSVGELEPRMFSFNSPFGACPTC). ABC transporter domains lie at 309–587 (WRPI…KNSI) and 607–936 (GNGL…KYLK). 639–646 (GVSGSGKS) provides a ligand contact to ATP. A C4-type zinc finger spans residues 738–764 (CEACKGDGIIKIEMHFLPDVYVPCEVC).

This sequence belongs to the ABC transporter superfamily. UvrA family. Forms a heterotetramer with UvrB during the search for lesions.

It is found in the cytoplasm. Functionally, the UvrABC repair system catalyzes the recognition and processing of DNA lesions. UvrA is an ATPase and a DNA-binding protein. A damage recognition complex composed of 2 UvrA and 2 UvrB subunits scans DNA for abnormalities. When the presence of a lesion has been verified by UvrB, the UvrA molecules dissociate. The chain is UvrABC system protein A from Listeria innocua serovar 6a (strain ATCC BAA-680 / CLIP 11262).